A 389-amino-acid polypeptide reads, in one-letter code: Lipid-A-disaccharide synthase (389 aa).

It belongs to the LpxB family.

The enzyme catalyses a lipid X + a UDP-2-N,3-O-bis[(3R)-3-hydroxyacyl]-alpha-D-glucosamine = a lipid A disaccharide + UDP + H(+). The protein operates within bacterial outer membrane biogenesis; LPS lipid A biosynthesis. Condensation of UDP-2,3-diacylglucosamine and 2,3-diacylglucosamine-1-phosphate to form lipid A disaccharide, a precursor of lipid A, a phosphorylated glycolipid that anchors the lipopolysaccharide to the outer membrane of the cell. The chain is Lipid-A-disaccharide synthase from Paraburkholderia phymatum (strain DSM 17167 / CIP 108236 / LMG 21445 / STM815) (Burkholderia phymatum).